A 733-amino-acid polypeptide reads, in one-letter code: Photosystem I P700 chlorophyll a apoprotein A2 (733 aa).

A run of 8 helical transmembrane segments spans residues 46–69 (IFAS…FHVA), 134–157 (LYLG…LHLQ), 174–198 (LNHH…HVAL), 272–290 (IAHH…GHMY), 329–352 (LHIQ…QHMY), 368–394 (AALY…IFFV), 416–438 (AIIS…LYIH), and 516–534 (FLVH…LILV). [4Fe-4S] cluster contacts are provided by C558 and C567. A run of 2 helical transmembrane segments spans residues 574 to 595 (AFYL…YWHW) and 642 to 664 (LSVW…MFLI). Chlorophyll a is bound by residues H653, M661, and Y669. A phylloquinone-binding site is contributed by W670. The helical transmembrane segment at 706-726 (LVGLVHFAVGYILTYAAFVIA) threads the bilayer.

It belongs to the PsaA/PsaB family. In terms of assembly, the PsaA/B heterodimer binds the P700 chlorophyll special pair and subsequent electron acceptors. PSI consists of a core antenna complex that captures photons, and an electron transfer chain that converts photonic excitation into a charge separation. The eukaryotic PSI reaction center is composed of at least 11 subunits. P700 is a chlorophyll a/chlorophyll a' dimer, A0 is one or more chlorophyll a, A1 is one or both phylloquinones and FX is a shared 4Fe-4S iron-sulfur center. is required as a cofactor.

The protein localises to the plastid. Its subcellular location is the chloroplast thylakoid membrane. The enzyme catalyses reduced [plastocyanin] + hnu + oxidized [2Fe-2S]-[ferredoxin] = oxidized [plastocyanin] + reduced [2Fe-2S]-[ferredoxin]. Its function is as follows. PsaA and PsaB bind P700, the primary electron donor of photosystem I (PSI), as well as the electron acceptors A0, A1 and FX. PSI is a plastocyanin/cytochrome c6-ferredoxin oxidoreductase, converting photonic excitation into a charge separation, which transfers an electron from the donor P700 chlorophyll pair to the spectroscopically characterized acceptors A0, A1, FX, FA and FB in turn. Oxidized P700 is reduced on the lumenal side of the thylakoid membrane by plastocyanin or cytochrome c6. The chain is Photosystem I P700 chlorophyll a apoprotein A2 from Trieres chinensis (Marine centric diatom).